A 416-amino-acid chain; its full sequence is Probable carboxypeptidase An18g06210 (416 aa).

The N-terminal stretch at 1–16 (MKSPISLLAAVGVASA) is a signal peptide. Asparagine 54, asparagine 70, and asparagine 129 each carry an N-linked (GlcNAc...) asparagine glycan. Aspartate 142 provides a ligand contact to Zn(2+). The active-site Proton acceptor is the glutamate 174. Glutamate 175 serves as a coordination point for Zn(2+). Asparagine 187 and asparagine 319 each carry an N-linked (GlcNAc...) asparagine glycan.

Belongs to the peptidase M20A family. Zn(2+) serves as cofactor.

Its subcellular location is the secreted. In Aspergillus niger (strain ATCC MYA-4892 / CBS 513.88 / FGSC A1513), this protein is Probable carboxypeptidase An18g06210.